We begin with the raw amino-acid sequence, 439 residues long: tRNA-2-methylthio-N(6)-dimethylallyladenosine synthase (439 aa).

Residues Lys-5–Ala-121 enclose the MTTase N-terminal domain. Positions 14, 50, 84, 159, 163, and 166 each coordinate [4Fe-4S] cluster. One can recognise a Radical SAM core domain in the interval Ala-145–Asp-378. The region spanning Asp-378–Ala-439 is the TRAM domain.

Belongs to the methylthiotransferase family. MiaB subfamily. As to quaternary structure, monomer. The cofactor is [4Fe-4S] cluster.

Its subcellular location is the cytoplasm. It catalyses the reaction N(6)-dimethylallyladenosine(37) in tRNA + (sulfur carrier)-SH + AH2 + 2 S-adenosyl-L-methionine = 2-methylsulfanyl-N(6)-dimethylallyladenosine(37) in tRNA + (sulfur carrier)-H + 5'-deoxyadenosine + L-methionine + A + S-adenosyl-L-homocysteine + 2 H(+). Functionally, catalyzes the methylthiolation of N6-(dimethylallyl)adenosine (i(6)A), leading to the formation of 2-methylthio-N6-(dimethylallyl)adenosine (ms(2)i(6)A) at position 37 in tRNAs that read codons beginning with uridine. This Ruegeria pomeroyi (strain ATCC 700808 / DSM 15171 / DSS-3) (Silicibacter pomeroyi) protein is tRNA-2-methylthio-N(6)-dimethylallyladenosine synthase.